The following is a 552-amino-acid chain: DUF724 domain-containing protein 10 (552 aa).

The disordered stretch occupies residues 308–361 (SSLTQGSGDKTEVETQRKTFPKKTLPRNQNGSGNDSTLENENSNRKRKREENLC). The span at 333–348 (PRNQNGSGNDSTLENE) shows a compositional bias: polar residues. In terms of domain architecture, DUF724 spans 371 to 543 (ILFEKKLPVW…LEFQATASAP (173 aa)).

As to expression, expressed at low levels in leaves, stems, flowers and siliques.

Functionally, may be involved in the polar growth of plant cells via transportation of RNAs. The protein is DUF724 domain-containing protein 10 of Arabidopsis thaliana (Mouse-ear cress).